The primary structure comprises 1069 residues: Adenylate-forming reductase (1069 aa).

Positions 20 to 391 (HPEDPKAVKS…WKLRQDINYR (372 aa)) are adenylation (A) domain. Residues His262, 357–358 (AH), Thr362, and 437–440 (AVGR) each bind AMP. The 81-residue stretch at 576–656 (DSLEEDLKDL…KLGASLRHLA (81 aa)) folds into the Carrier domain. Ser612 bears the O-(pantetheine 4'-phosphoryl)serine mark. The interval 686 to 1032 (TVLLTGSTGN…TGKVILDTSR (347 aa)) is reductase (R) domain. NADP(+)-binding positions include 693-696 (TGNL), Arg719, 785-787 (NAW), Tyr863, and Lys867.

It belongs to the adenylate-forming reductase family.

The enzyme catalyses 5-methylorsellinate + ATP + NADPH + H(+) = 2,4-dihydroxy 5,6-dimethylbenzaldehyde + AMP + diphosphate + NADP(+). The protein operates within secondary metabolite biosynthesis. Functionally, non-canonical non-ribosomal peptide synthetase; part of the cluster A that mediates the biosynthesis of azasperpyranones, members of the azaphilone family that exhibit anti-cancer activities. Azasperpyranones are synthesized by 2 clusters, A and B. Cluster A is responsible for the production of the polyhydric phenol moiety while the azaphilonoid scaffold is produced by the cluster B. The non-reducing polyketide synthase ATEG_03629 produces 5-methyl orsellinic acid, which is then reduced to 5-methyl orsellinic aldehyde by the NRPS-like protein ATEG_03630. 5-methyl orsellinic aldehyde is then first hydroxylated by the FAD-dependent monooxygenase ATEG_03635 and subsequently hydroxylated by the cytochrome P450 monooxygenase ATEG_03631 to produce the unstable polyhydric phenol precursor of azasperpyranones. On the other hand, the polyketide synthase ATEG_07659 is responsible for producing the 3,5-dimethyloctadienone moiety from acetyl-CoA, three malonyl-CoA, and two S-adenosyl methionines (SAM). The 3,5-dimethyloctadienone moiety is then loaded onto the SAT domain of ATEG_07661 and extended with four malonyl-CoA and one SAM, which leads to the formation of 2,4-dihydroxy-6-(5,7-dimethyl-2-oxo-trans-3-trans-5-nonadienyl)-3-methylbenzaldehyde (compound 8) after reductive release and aldol condensation. The FAD-dependent monooxygenase ATEG_07662 is the next enzyme in the biosynthesis sequence and hydroxylates the side chain at the benzylic position of compound 8. In Aspergillus nidulans, afoF, the ortholog of the FAD-dependent oxygenase ATEG_07660, is the key enzyme for the biosynthesis of asperfuranone by catalyzing the hydroxylation at C-8 of to prevent the formation of a six-membered ring hemiacetal intermediate and thus facilitating the formation of a five-membered ring to produce asperfuranone. In Aspergillus terreus, ATEG_07660 is probably not functional, which leads to the formation of the six-membered ring hemiacetal intermediate presperpyranone instead of asperfuranone. Finally, ATEG_03636 is involved in the condensation of the polyhydric phenol moiety produced by cluster A and the perasperpyranone precursor produced by cluster B, to yield azasperpyranone A. Further modifications of azasperpyranone A result in the production of derivatives, including azasperpyranone B to F. The sequence is that of Adenylate-forming reductase from Aspergillus terreus (strain NIH 2624 / FGSC A1156).